The chain runs to 615 residues: Elongation factor 4 (615 aa).

Residues 14-200 enclose the tr-type G domain; sequence SRIRNFCIIA…KVVELIPAPS (187 aa). GTP contacts are provided by residues 26–31 and 147–150; these read DHGKST and NKID.

Belongs to the TRAFAC class translation factor GTPase superfamily. Classic translation factor GTPase family. LepA subfamily.

It is found in the cell membrane. It catalyses the reaction GTP + H2O = GDP + phosphate + H(+). In terms of biological role, required for accurate and efficient protein synthesis under certain stress conditions. May act as a fidelity factor of the translation reaction, by catalyzing a one-codon backward translocation of tRNAs on improperly translocated ribosomes. Back-translocation proceeds from a post-translocation (POST) complex to a pre-translocation (PRE) complex, thus giving elongation factor G a second chance to translocate the tRNAs correctly. Binds to ribosomes in a GTP-dependent manner. This chain is Elongation factor 4, found in Corynebacterium efficiens (strain DSM 44549 / YS-314 / AJ 12310 / JCM 11189 / NBRC 100395).